The primary structure comprises 164 residues: UPF0251 protein MA_0157 (164 aa).

The tract at residues 91-124 is disordered; it reads GDYRMPRGDGTGPAGQGPVGGGRSRGQGKGRGGR. Gly residues predominate over residues 99 to 115; the sequence is DGTGPAGQGPVGGGRSR.

It belongs to the UPF0251 family.

The polypeptide is UPF0251 protein MA_0157 (Methanosarcina acetivorans (strain ATCC 35395 / DSM 2834 / JCM 12185 / C2A)).